A 584-amino-acid polypeptide reads, in one-letter code: Zinc finger and BTB domain-containing protein 7A (584 aa).

Residues 34-101 enclose the BTB domain; sequence CDVVILVEGR…AYTATLTVST (68 aa). A disordered region spans residues 220–313; that stretch reads YGPGPPAERP…EDGDGPDVDG (94 aa). Residues 277-584 form a mediates interaction with KHDRBS1 region; that stretch reads EEEAASLSEA…TDGNFTAGLA (308 aa). Low complexity predominate over residues 281–290; it reads ASLSEAAPEP. Serine 337 and serine 341 each carry phosphoserine. The segment at 349–584 is mediates interaction with RELA; that stretch reads MDYYLKYFSG…TDGNFTAGLA (236 aa). The mediates interaction with SMAD4 stretch occupies residues 377-584; it reads RAKAFQKCPI…TDGNFTAGLA (208 aa). 2 consecutive C2H2-type zinc fingers follow at residues 382-404 and 410-432; these read QKCP…IRTH and YECN…MRKH. A Glycyl lysine isopeptide (Lys-Gly) (interchain with G-Cter in SUMO2) cross-link involves residue lysine 436. The C2H2-type 3 zinc-finger motif lies at 438–460; that stretch reads YLCQQCGAAFAHNYDLKNHMRVH. The C2H2-type 4; atypical zinc-finger motif lies at 466–490; the sequence is YQCDSCCKTFVRSDHLHRHLKKDGC. The segment at 486–584 is disordered; that stretch reads KKDGCNGVPS…TDGNFTAGLA (99 aa). Low complexity predominate over residues 505-527; the sequence is GGAPDPSPGATATPGAPAQPSSP. Phosphoserine is present on residues serine 511, serine 525, and serine 526. Basic and acidic residues predominate over residues 528–540; that stretch reads DARRNGQEKHFKD. Lysine 539 participates in a covalent cross-link: Glycyl lysine isopeptide (Lys-Gly) (interchain with G-Cter in SUMO2). Serine 549 carries the post-translational modification Phosphoserine. Gly residues predominate over residues 560 to 572; sequence GAGGGGDSGGGPG.

Homodimer. Interacts with BCL6. Interacts with RELA; involved in the control by RELA of the accessibility of target gene promoters. Interacts with AR (via NR LBD domain); the interaction is direct and androgen-dependent. Interacts with NCOR1. Interacts with NCOR2. Interacts with SMAD4; the interaction is direct and stimulated by TGFB1. Interacts with HDAC1. Interacts with SP1; ZBTB7A prevents the binding to GC-rich motifs in promoters and represses the transcriptional activity of SP1. Interacts with the DNA-dependent protein kinase complex/DNA-PKc. Interacts with KHDRBS1; negatively regulates KHDRBS1 splicing activity. Sumoylated. Undergoes sumoylation with SUMO1 that may regulate its transcriptional activity. Widely expressed. In normal thymus, expressed in medullary epithelial cells and Hassle's corpuscles (at protein level). In tonsil, expressed in squamous epithelium and germinal center lymphocytes (at protein level). Up-regulated in a subset of lymphomas, as well as in a subset of breast, lung, colon, prostate and bladder carcinomas (at protein level). Expressed in adipose tissues.

The protein resides in the nucleus. In terms of biological role, transcription factor that represses the transcription of a wide range of genes involved in cell proliferation and differentiation. Directly and specifically binds to the consensus sequence 5'-[GA][CA]GACCCCCCCCC-3' and represses transcription both by regulating the organization of chromatin and through the direct recruitment of transcription factors to gene regulatory regions. Negatively regulates SMAD4 transcriptional activity in the TGF-beta signaling pathway through these two mechanisms. That is, recruits the chromatin regulator HDAC1 to the SMAD4-DNA complex and in parallel prevents the recruitment of the transcriptional activators CREBBP and EP300. Collaborates with transcription factors like RELA to modify the accessibility of gene transcription regulatory regions to secondary transcription factors. Also directly interacts with transcription factors like SP1 to prevent their binding to DNA. Functions as an androgen receptor/AR transcriptional corepressor by recruiting NCOR1 and NCOR2 to the androgen response elements/ARE on target genes. Thereby, negatively regulates androgen receptor signaling and androgen-induced cell proliferation. Involved in the switch between fetal and adult globin expression during erythroid cells maturation. Through its interaction with the NuRD complex regulates chromatin at the fetal globin genes to repress their transcription. Specifically represses the transcription of the tumor suppressor ARF isoform from the CDKN2A gene. Efficiently abrogates E2F1-dependent CDKN2A transactivation. Regulates chondrogenesis through the transcriptional repression of specific genes via a mechanism that also requires histone deacetylation. Regulates cell proliferation through the transcriptional regulation of genes involved in glycolysis. Involved in adipogenesis through the regulation of genes involved in adipocyte differentiation. Plays a key role in the differentiation of lymphoid progenitors into B and T lineages. Promotes differentiation towards the B lineage by inhibiting the T-cell instructive Notch signaling pathway through the specific transcriptional repression of Notch downstream target genes. Also regulates osteoclast differentiation. May also play a role, independently of its transcriptional activity, in double-strand break repair via classical non-homologous end joining/cNHEJ. Recruited to double-strand break sites on damage DNA, interacts with the DNA-dependent protein kinase complex and directly regulates its stability and activity in DNA repair. May also modulate the splicing activity of KHDRBS1 toward BCL2L1 in a mechanism which is histone deacetylase-dependent and thereby negatively regulates the pro-apoptotic effect of KHDRBS1. The sequence is that of Zinc finger and BTB domain-containing protein 7A from Homo sapiens (Human).